The primary structure comprises 676 residues: Transketolase 7 (676 aa).

Histidine 36 contributes to the substrate binding site. Residues histidine 76 and 125–127 each bind thiamine diphosphate; that span reads GPL. Aspartate 166 provides a ligand contact to Mg(2+). Glycine 167 and asparagine 196 together coordinate thiamine diphosphate. The Mg(2+) site is built by asparagine 196 and isoleucine 198. The substrate site is built by histidine 273, arginine 367, and serine 394. A thiamine diphosphate-binding site is contributed by histidine 273. Residues glutamate 421 and phenylalanine 448 each contribute to the thiamine diphosphate site. Glutamate 421 functions as the Proton donor in the catalytic mechanism. The substrate site is built by histidine 472, aspartate 480, and arginine 531.

This sequence belongs to the transketolase family. As to quaternary structure, homodimer. Mg(2+) is required as a cofactor. It depends on Ca(2+) as a cofactor. Requires Mn(2+) as cofactor. The cofactor is Co(2+). Thiamine diphosphate serves as cofactor. As to expression, leaves and roots.

It carries out the reaction D-sedoheptulose 7-phosphate + D-glyceraldehyde 3-phosphate = aldehydo-D-ribose 5-phosphate + D-xylulose 5-phosphate. Its function is as follows. Could be involved in the conversion of sugars, which are a major phenomenon in the rehydration process. Catalyzes the transfer of a two-carbon ketol group from a ketose donor to an aldose acceptor, via a covalent intermediate with the cofactor thiamine pyrophosphate. The polypeptide is Transketolase 7 (TKT7) (Craterostigma plantagineum (Blue gem)).